A 533-amino-acid polypeptide reads, in one-letter code: Basal body-orientation factor 1 (533 aa).

The interval 1–30 (MPAKDKRKDKRKDKRKGKNKGKEPKKIIKS) is disordered. Positions 7-19 (RKDKRKDKRKGKN) are enriched in basic residues. Basic and acidic residues predominate over residues 20–30 (KGKEPKKIIKS). Coiled-coil stretches lie at residues 34 to 207 (AIER…EAEK) and 246 to 368 (LKEA…VEQF). Residues 277-533 (VKEKIMQLTQ…PQGLQDSDIA (257 aa)) form an interaction with MNS1 and ODF2 region. A compositionally biased stretch (polar residues) spans 507 to 517 (QQAPVSDSNRM). Residues 507-533 (QQAPVSDSNRMVSPDVIPQGLQDSDIA) are disordered.

This sequence belongs to the BBOF1 family. In terms of assembly, interacts with MNS1 and ODF2. As to expression, expressed exclusively in the testis and predominantly expressed in male germ cells.

The protein localises to the cytoplasm. It is found in the cytoskeleton. Its subcellular location is the cilium basal body. The protein resides in the flagellum axoneme. Its function is as follows. Plays an essential role in sperm motility and male fertility by stabilizing the sperm flagellar axonemal structure. May be required for the stability of ODF2 and MANS1 proteins. Dispensable for the assembly and function of motile cilia. This chain is Basal body-orientation factor 1, found in Mus musculus (Mouse).